Reading from the N-terminus, the 750-residue chain is Photosystem I P700 chlorophyll a apoprotein A1 (750 aa).

Transmembrane regions (helical) follow at residues 70–93 (VFSA…FHGA), 156–179 (LYCT…FHYH), 195–219 (LNHH…HVSL), 291–309 (IAHH…GHMY), 346–369 (WHAQ…HHMY), 385–411 (LSLF…IFMV), 433–455 (AIIS…LYIH), and 531–549 (FLVH…LILL). Cys-573 and Cys-582 together coordinate [4Fe-4S] cluster. Transmembrane regions (helical) follow at residues 589-610 (HVFL…HFSW) and 664-686 (LSAY…MFLF). His-675 serves as a coordination point for chlorophyll a'. 2 residues coordinate chlorophyll a: Met-683 and Tyr-691. A phylloquinone-binding site is contributed by Trp-692. The helical transmembrane segment at 724-744 (AVGVTHYLLGGIATTWAFFLA) threads the bilayer.

Belongs to the PsaA/PsaB family. In terms of assembly, the PsaA/B heterodimer binds the P700 chlorophyll special pair and subsequent electron acceptors. PSI consists of a core antenna complex that captures photons, and an electron transfer chain that converts photonic excitation into a charge separation. The eukaryotic PSI reaction center is composed of at least 11 subunits. P700 is a chlorophyll a/chlorophyll a' dimer, A0 is one or more chlorophyll a, A1 is one or both phylloquinones and FX is a shared 4Fe-4S iron-sulfur center. serves as cofactor.

It is found in the plastid. The protein localises to the chloroplast thylakoid membrane. It catalyses the reaction reduced [plastocyanin] + hnu + oxidized [2Fe-2S]-[ferredoxin] = oxidized [plastocyanin] + reduced [2Fe-2S]-[ferredoxin]. In terms of biological role, psaA and PsaB bind P700, the primary electron donor of photosystem I (PSI), as well as the electron acceptors A0, A1 and FX. PSI is a plastocyanin-ferredoxin oxidoreductase, converting photonic excitation into a charge separation, which transfers an electron from the donor P700 chlorophyll pair to the spectroscopically characterized acceptors A0, A1, FX, FA and FB in turn. Oxidized P700 is reduced on the lumenal side of the thylakoid membrane by plastocyanin. In Vitis vinifera (Grape), this protein is Photosystem I P700 chlorophyll a apoprotein A1.